A 77-amino-acid polypeptide reads, in one-letter code: Liver-expressed antimicrobial peptide 2 (77 aa).

The signal sequence occupies residues 1–22 (MWHLKLFAVLVICLLLAVQVHG). The propeptide occupies 23 to 37 (SPIPELSSAKRRPRR). 2 disulfide bridges follow: C54-C65 and C60-C70.

This sequence belongs to the LEAP2 family.

It localises to the secreted. In terms of biological role, has an antimicrobial activity. The polypeptide is Liver-expressed antimicrobial peptide 2 (LEAP2) (Sus scrofa (Pig)).